We begin with the raw amino-acid sequence, 142 residues long: HTH-type transcriptional regulator MntR (142 aa).

An HTH dtxR-type domain is found at 1 to 63 (MPTPSMEDYI…YEKYRGLVLT (63 aa)). Residues Asp-8, Glu-11, His-77, Glu-99, Glu-102, and His-103 each coordinate Mn(2+).

The protein belongs to the DtxR/MntR family. In terms of assembly, homodimer.

Its subcellular location is the cytoplasm. Its activity is regulated as follows. DNA binding is strongly activated by Mn(2+). Functionally, central regulator of manganese homeostasis. The chain is HTH-type transcriptional regulator MntR from Bacillus mycoides (strain KBAB4) (Bacillus weihenstephanensis).